The following is a 322-amino-acid chain: 26S proteasome non-ATPase regulatory subunit 7 (322 aa).

Residues 9–144 (VVVHPLVLLS…TEAYISVEEV (136 aa)) form the MPN domain. A Glycyl lysine isopeptide (Lys-Gly) (interchain with G-Cter in ubiquitin) cross-link involves residue K180. N6-acetyllysine is present on residues K204, K214, K314, and K315. The segment at 281 to 322 (ANRDAEKKEGQEKEDSKKDRKDDKEKEKEKSDVKKEEKKEKK) is disordered.

The protein belongs to the peptidase M67A family. In terms of assembly, component of the 19S proteasome regulatory particle complex. The 26S proteasome consists of a 20S core particle (CP) and two 19S regulatory subunits (RP). The regulatory particle is made of a lid composed of 9 subunits including PSMD7, a base containing 6 ATPases and few additional components. Within the complex, PSMD7 interacts with subunit PSMD4 through their respective MPN domain. Interacts with TRIM5.

Functionally, component of the 26S proteasome, a multiprotein complex involved in the ATP-dependent degradation of ubiquitinated proteins. This complex plays a key role in the maintenance of protein homeostasis by removing misfolded or damaged proteins, which could impair cellular functions, and by removing proteins whose functions are no longer required. Therefore, the proteasome participates in numerous cellular processes, including cell cycle progression, apoptosis, or DNA damage repair. The chain is 26S proteasome non-ATPase regulatory subunit 7 (PSMD7) from Bos taurus (Bovine).